Reading from the N-terminus, the 644-residue chain is Chaperone protein DnaK (644 aa).

Residue Thr-199 is modified to Phosphothreonine; by autocatalysis. Positions 602-644 (IYAKKSSEGQTAQGQTQSQESTKPAEEGVVDAEFEEVKEEDKK) are disordered. Residues 609–623 (EGQTAQGQTQSQEST) show a composition bias toward polar residues. Acidic residues predominate over residues 629-644 (GVVDAEFEEVKEEDKK).

The protein belongs to the heat shock protein 70 family.

In terms of biological role, acts as a chaperone. This is Chaperone protein DnaK from Legionella pneumophila (strain Lens).